Consider the following 459-residue polypeptide: Kelch-like protein terF (459 aa).

6 Kelch repeats span residues Ser92–Asp144, Glu145–Gly196, Ile198–Val248, Thr251–Asp304, Leu306–Ser354, and Leu355–Gly405.

Its pathway is secondary metabolite biosynthesis. Functionally, kelch-like protein; part of the gene cluster that mediates the biosynthesis of terrein, a fungal metabolite with ecological, antimicrobial, antiproliferative, and antioxidative activities. The first step in the pathway is performed by the polyketide synthase terA that produces 4-hydroxy-6-methylpyranon (4-HMP), orsellinic acid (OA), and 2,3-dehydro-6-hydroxymellein (2,3-dehydro-6-HM) by condensing acetyl-CoA with two, three, or four malonyl-CoA units, respectively. 4-HMP and OA are not pathway intermediates, but are rather shunt or side products. 2,3-dehydro-6-HM is further converted to 6-hydroxymellein (6-HM) by the 6-hydroxymellein synthase terB. The monooxygenases terC and terD, the multicopper oxidase terE and the Kelch-like protein terF are then involved in the transformation of 6-HM to terrein. Even if they are co-regulated with the other terrein cluster genes, terH and terI seem to be dispensable for terrein production; whereas one or both of the 2 transporters terG and terJ are probably required for efficient secretion of metabolites. This Aspergillus terreus (strain NIH 2624 / FGSC A1156) protein is Kelch-like protein terF.